The primary structure comprises 162 residues: Peroxiredoxin-2B (162 aa).

Residues 4-162 enclose the Thioredoxin domain; sequence IAVGDVVPDG…SSADDILKAL (159 aa). Catalysis depends on Cys-51, which acts as the Cysteine sulfenic acid (-SOH) intermediate.

It belongs to the peroxiredoxin family. Prx5 subfamily. In terms of assembly, monomer. In terms of tissue distribution, expressed in all tissues but mostly in reproductive tissues such as buds, flowers, siliques and seeds.

It is found in the cytoplasm. The catalysed reaction is [glutaredoxin]-dithiol + a hydroperoxide = [glutaredoxin]-disulfide + an alcohol + H2O. In terms of biological role, reduces hydrogen peroxide and alkyl hydroperoxides with reducing equivalents provided through the thioredoxin or glutaredoxin system. May be involved in intracellular redox signaling. Functionally, thiol-specific peroxidase that catalyzes the reduction of hydrogen peroxide and organic hydroperoxides to water and alcohols, respectively. Plays a role in cell protection against oxidative stress by detoxifying peroxides and as sensor of hydrogen peroxide-mediated signaling events. This is Peroxiredoxin-2B (PRXIIB) from Arabidopsis thaliana (Mouse-ear cress).